Here is a 339-residue protein sequence, read N- to C-terminus: 3-isopropylmalate dehydrogenase (339 aa).

R88, R98, R122, and D212 together coordinate substrate. Residues D212, D236, and D240 each contribute to the Mg(2+) site. NAD(+) is bound at residue 272 to 284 (GSAPDIAGQGIAD).

Belongs to the isocitrate and isopropylmalate dehydrogenases family. LeuB type 2 subfamily. Homodimer. The cofactor is Mg(2+). It depends on Mn(2+) as a cofactor.

The protein resides in the cytoplasm. It carries out the reaction (2R,3S)-3-isopropylmalate + NAD(+) = 4-methyl-2-oxopentanoate + CO2 + NADH. It participates in amino-acid biosynthesis; L-leucine biosynthesis; L-leucine from 3-methyl-2-oxobutanoate: step 3/4. In terms of biological role, catalyzes the oxidation of 3-carboxy-2-hydroxy-4-methylpentanoate (3-isopropylmalate) to 3-carboxy-4-methyl-2-oxopentanoate. The product decarboxylates to 4-methyl-2 oxopentanoate. This is 3-isopropylmalate dehydrogenase from Corynebacterium diphtheriae (strain ATCC 700971 / NCTC 13129 / Biotype gravis).